Here is a 234-residue protein sequence, read N- to C-terminus: Large ribosomal subunit protein uL1 (234 aa).

It belongs to the universal ribosomal protein uL1 family. Part of the 50S ribosomal subunit.

Functionally, binds directly to 23S rRNA. The L1 stalk is quite mobile in the ribosome, and is involved in E site tRNA release. Protein L1 is also a translational repressor protein, it controls the translation of the L11 operon by binding to its mRNA. The protein is Large ribosomal subunit protein uL1 of Escherichia coli O127:H6 (strain E2348/69 / EPEC).